The primary structure comprises 249 residues: Probable septum site-determining protein MinC (249 aa).

The segment at 115 to 141 (KPAQEAPAQAEPEAAAAPEPANEPAPA) is disordered. Over residues 118 to 141 (QEAPAQAEPEAAAAPEPANEPAPA) the composition is skewed to low complexity.

It belongs to the MinC family. Interacts with MinD and FtsZ.

In terms of biological role, cell division inhibitor that blocks the formation of polar Z ring septums. Rapidly oscillates between the poles of the cell to destabilize FtsZ filaments that have formed before they mature into polar Z rings. Prevents FtsZ polymerization. This is Probable septum site-determining protein MinC from Marinobacter nauticus (strain ATCC 700491 / DSM 11845 / VT8) (Marinobacter aquaeolei).